A 73-amino-acid polypeptide reads, in one-letter code: DNA gyrase inhibitor YacG (73 aa).

The Zn(2+) site is built by Cys14, Cys17, Cys30, and Cys34. The segment at 54 to 73 is disordered; sequence AEQADDTAGPGAAEDDTDSH.

The protein belongs to the DNA gyrase inhibitor YacG family. In terms of assembly, interacts with GyrB. The cofactor is Zn(2+).

Its function is as follows. Inhibits all the catalytic activities of DNA gyrase by preventing its interaction with DNA. Acts by binding directly to the C-terminal domain of GyrB, which probably disrupts DNA binding by the gyrase. The sequence is that of DNA gyrase inhibitor YacG from Hyphomonas neptunium (strain ATCC 15444).